Reading from the N-terminus, the 140-residue chain is Peptidyl-prolyl cis-trans isomerase FKBP2 (140 aa).

Positions 1-20 (MRLSWVLTVLSICLSALVTA) are cleaved as a signal peptide. The PPIase FKBP-type domain maps to 47-135 (GDVLHMHYTG…VFEVELLKIE (89 aa)).

The protein belongs to the FKBP-type PPIase family. FKBP2 subfamily. As to quaternary structure, interacts with ARFGEF1/BIG1 and the C-terminal of EPB41L2.

It localises to the endoplasmic reticulum membrane. The catalysed reaction is [protein]-peptidylproline (omega=180) = [protein]-peptidylproline (omega=0). Inhibited by both FK506 and rapamycin. PPIases accelerate the folding of proteins. It catalyzes the cis-trans isomerization of proline imidic peptide bonds in oligopeptides. This Bos taurus (Bovine) protein is Peptidyl-prolyl cis-trans isomerase FKBP2 (FKBP2).